The sequence spans 140 residues: Lymphocyte antigen 6 complex locus protein G5c (140 aa).

The N-terminal stretch at 1 to 41 (MRFMAGPAGSQNPGPMCFHSSLQALYTVLLIVLVMMSLVFG) is a signal peptide. Residues 60–140 (LRCYRCLLET…SQCCFLGFLQ (81 aa)) enclose the UPAR/Ly6 domain. Disulfide bonds link Cys62-Cys89, Cys65-Cys74, Cys81-Cys107, and Cys116-Cys133. An N-linked (GlcNAc...) asparagine glycan is attached at Asn96.

In terms of assembly, forms oligomers. Post-translationally, N-glycosylated.

Its subcellular location is the secreted. Its function is as follows. May have a role in hematopoietic cell differentiation. The polypeptide is Lymphocyte antigen 6 complex locus protein G5c (LY6G5C) (Macaca mulatta (Rhesus macaque)).